The primary structure comprises 168 residues: Ribosome-binding factor A (168 aa).

Residues 122 to 136 (VRRDARPAGDDDPYR) show a composition bias toward basic and acidic residues. The interval 122–168 (VRRDARPAGDDDPYRRPRPAAGEVDELSEVDELSEVDEYGGTARQEG) is disordered. The span at 144–159 (EVDELSEVDELSEVDE) shows a compositional bias: acidic residues.

It belongs to the RbfA family. In terms of assembly, monomer. Binds 30S ribosomal subunits, but not 50S ribosomal subunits or 70S ribosomes.

Its subcellular location is the cytoplasm. In terms of biological role, one of several proteins that assist in the late maturation steps of the functional core of the 30S ribosomal subunit. Associates with free 30S ribosomal subunits (but not with 30S subunits that are part of 70S ribosomes or polysomes). Required for efficient processing of 16S rRNA. May interact with the 5'-terminal helix region of 16S rRNA. This chain is Ribosome-binding factor A, found in Frankia casuarinae (strain DSM 45818 / CECT 9043 / HFP020203 / CcI3).